The chain runs to 100 residues: Large ribosomal subunit protein uL23 (100 aa).

The protein belongs to the universal ribosomal protein uL23 family. In terms of assembly, part of the 50S ribosomal subunit. Contacts protein L29, and trigger factor when it is bound to the ribosome.

Its function is as follows. One of the early assembly proteins it binds 23S rRNA. One of the proteins that surrounds the polypeptide exit tunnel on the outside of the ribosome. Forms the main docking site for trigger factor binding to the ribosome. This is Large ribosomal subunit protein uL23 from Mycolicibacterium gilvum (strain PYR-GCK) (Mycobacterium gilvum (strain PYR-GCK)).